The primary structure comprises 618 residues: Chaperone protein HtpG (618 aa).

Residues 1 to 340 (MATKHQFQTE…SEDLPLNVSR (340 aa)) are a; substrate-binding. The interval 341 to 545 (EILQQNKILA…KEDNNPMMAN (205 aa)) is b. The interval 546-618 (LMAQMGQKVP…ELNSLLLQSL (73 aa)) is c.

The protein belongs to the heat shock protein 90 family. As to quaternary structure, homodimer.

The protein localises to the cytoplasm. In terms of biological role, molecular chaperone. Has ATPase activity. In Helicobacter hepaticus (strain ATCC 51449 / 3B1), this protein is Chaperone protein HtpG.